The following is a 146-amino-acid chain: UPF0178 protein Lin1493 (146 aa).

This sequence belongs to the UPF0178 family.

This Listeria innocua serovar 6a (strain ATCC BAA-680 / CLIP 11262) protein is UPF0178 protein Lin1493.